Reading from the N-terminus, the 534-residue chain is MFQFHAGSWESWCCCCLIPADRPWDRGQHWQLEMADTRSVHETRFEAAVKVIQSLPKNGSFQPTNEMMLKFYSFYKQATEGPCKLSRPGFWDPIGRYKWDAWSSLGDMTKEEAMIAYVEEMKKIIETMPMTEKVEELLRVIGPFYEIVEDKKSGRSSDITSVRLEKISKCLEDLGNVLTSTPNAKTVNGKAESSDSGAESEEEEAQEEVKGAEQSDNDKKMMKKSADHKNLEVIVTNGYDKDGFVQDIQNDIHASSSLNGRSTEEVKPIDENLGQTGKSAVCIHQDINDDHVEDVTGIQHLTSDSDSEVYCDSMEQFGQEESLDSFTSNNGPFQYYLGGHSSQPMENSGFREDIQVPPGNGNIGNMQVVAVEGKGEVKHGGEDGRNNSGAPHREKRGGETDEFSNVRRGRGHRMQHLSEGTKGRQVGSGGDGERWGSDRGSRGSLNEQIALVLMRLQEDMQNVLQRLQKLETLTALQAKSSTSTLQTAPQPTSQRPSWWPFEMSPGVLTFAIIWPFIAQWLVYLYYQRRRRKLN.

The region spanning 41 to 130 is the ACB domain; it reads HETRFEAAVK…MKKIIETMPM (90 aa). 52–61 contacts an acyl-CoA; it reads IQSLPKNGSF. A Phosphothreonine modification is found at Pro-63. An acyl-CoA contacts are provided by residues 72–76, Lys-98, and Tyr-117; that span reads YSFYK. Residues Leu-137 and Glu-172 each carry the phosphothreonine modification. The interval 181–225 is disordered; sequence TPNAKTVNGKAESSDSGAESEEEEAQEEVKGAEQSDNDKKMMKKS. Residues 190–219 adopt a coiled-coil conformation; that stretch reads KAESSDSGAESEEEEAQEEVKGAEQSDNDK. Residues Ser-193, Ser-194, Ser-196, Ser-200, Ser-215, Ser-279, and Ser-313 each carry the phosphoserine modification. Residues 207-225 show a composition bias toward basic and acidic residues; sequence EEVKGAEQSDNDKKMMKKS. The segment covering 376–385 has biased composition (basic and acidic residues); the sequence is EVKHGGEDGR. The tract at residues 376 to 442 is disordered; sequence EVKHGGEDGR…ERWGSDRGSR (67 aa). Residue Thr-400 is modified to Phosphothreonine. Residue Ser-428 is modified to Phosphoserine. The span at 431-441 shows a compositional bias: basic and acidic residues; that stretch reads DGERWGSDRGS. A coiled-coil region spans residues 447 to 476; the sequence is EQIALVLMRLQEDMQNVLQRLQKLETLTAL. Position 469 is an N6-acetyllysine (Lys-469). Residues 506 to 526 traverse the membrane as a helical segment; it reads GVLTFAIIWPFIAQWLVYLYY.

The protein belongs to the ATG37 family.

It localises to the peroxisome membrane. Functionally, acyl-CoA binding protein which acts as the peroxisome receptor for pexophagy but is dispensable for aggrephagy and nonselective autophagy. Binds medium- and long-chain acyl-CoA esters. The chain is Acyl-CoA-binding domain-containing protein 5 (ACBD5) from Homo sapiens (Human).